Reading from the N-terminus, the 117-residue chain is UPF0102 protein Ssed_4252 (117 aa).

It belongs to the UPF0102 family.

The chain is UPF0102 protein Ssed_4252 from Shewanella sediminis (strain HAW-EB3).